The following is a 128-amino-acid chain: MIQVLLVTICLAVFPFHGSSIILESGNVNDYEVVYPKKVTLLPTGAMNSANPCCDPITCKPRKGEHCVSGPCCRNCKFLNPGTICKRTMLDGLNDYCTGITSDCPRNPWKSEEDEMKWSATAKGSVLM.

An N-terminal signal peptide occupies residues 1–20 (MIQVLLVTICLAVFPFHGSS). A propeptide spanning residues 21-46 (IILESGNVNDYEVVYPKKVTLLPTGA) is cleaved from the precursor. Residues 47–111 (MNSANPCCDP…SDCPRNPWKS (65 aa)) enclose the Disintegrin domain. 4 cysteine pairs are disulfide-bonded: Cys53–Cys76, Cys67–Cys73, Cys72–Cys97, and Cys85–Cys104. The Cell attachment site; atypical (MLD) signature appears at 89–91 (MLD). A propeptide spanning residues 112 to 128 (EEDEMKWSATAKGSVLM) is cleaved from the precursor.

Belongs to the disintegrin family. Dimeric disintegrin subfamily. Heterodimer with subunit beta; disulfide-linked. As to expression, expressed by the venom gland.

The protein localises to the secreted. Inhibits ADP-induced human platelet aggregation. Antagonist of alpha-IIb/beta-3 (ITGA2B/ITGB3). Also avidly binds to the laminin-binding beta-1 integrins (alpha-3/beta-1 (ITGA3/ITGB1), alpha-6/beta-1 (ITGA6/ITGB1), and alpha-7/beta-1 (ITGA7/ITGB1)) in an RGD-independent manner. This is Disintegrin lebein-2-alpha from Macrovipera lebetinus (Levantine viper).